The following is a 170-amino-acid chain: Fibroblast growth factor 2 (170 aa).

Residues 1–21 form a disordered region; sequence VGGRGRGRGTAAAARREPGGA. Residues arginine 4, arginine 6, and arginine 8 each carry the omega-N-methylarginine; alternate modification. 3 positions are modified to symmetric dimethylarginine; alternate: arginine 4, arginine 6, and arginine 8. A compositionally biased stretch (low complexity) spans 9–21; that stretch reads GTAAAARREPGGA. A heparin-binding site is contributed by asparagine 51. At tyrosine 97 the chain carries Phosphotyrosine; by TEC. Lysine 110 participates in a covalent cross-link: Glycyl lysine isopeptide (Lys-Gly) (interchain with G-Cter in SUMO1). Residues 143-159 form a heparin-binding region; that stretch reads KRTGQYKLGSKTGPGQK.

The protein belongs to the heparin-binding growth factors family. As to quaternary structure, monomer. Homodimer. Interacts with FGFR1, FGFR2, FGFR3 and FGFR4. Affinity between fibroblast growth factors (FGFs) and their receptors is increased by heparan sulfate glycosaminoglycans that function as coreceptors. Interacts with CSPG4, FGFBP1 and TEC. Found in a complex with FGFBP1, FGF1 and FGF2. Interacts with FGFBP3. Interacts with integrin ITGAV:ITGB3; the interaction is required for FGF2 signaling. Interacts with SNORC (via the extracellular domain). Interacts with glypican GPC3. The N-terminus of isoform 2 is blocked. In terms of processing, phosphorylation at Tyr-97 regulates FGF2 unconventional secretion.

Its subcellular location is the secreted. It localises to the nucleus. Acts as a ligand for FGFR1, FGFR2, FGFR3 and FGFR4. Also acts as an integrin ligand which is required for FGF2 signaling. Binds to integrin ITGAV:ITGB3. Plays an important role in the regulation of cell survival, cell division, cell differentiation and cell migration. Functions as a potent mitogen in vitro. Can induce angiogenesis. Mediates phosphorylation of ERK1/2 and thereby promotes retinal lens fiber differentiation. In Cavia porcellus (Guinea pig), this protein is Fibroblast growth factor 2 (FGF2).